Here is a 20-residue protein sequence, read N- to C-terminus: Magnificalysin I (20 aa).

The interval alanine 1–alanine 10 is plays an important role in the hemolytic activity. The tract at residues glycine 9–valine 20 is N-terminal region.

It belongs to the actinoporin family. Sea anemone subfamily. Octamer or nonamer in membranes. Monomer in the soluble state.

The protein localises to the secreted. It localises to the nematocyst. Its subcellular location is the target cell membrane. In terms of biological role, pore-forming protein that forms cations-selective hydrophilic pores of around 1 nm and causes cytolysis. Pore formation is a multi-step process that involves specific recognition of membrane sphingomyelin (but neither cholesterol nor phosphatidylcholine) using aromatic rich region and adjacent phosphocholine (POC) binding site, firm binding to the membrane (mainly driven by hydrophobic interactions) accompanied by the transfer of the N-terminal region to the lipid-water interface and finally pore formation after oligomerization of monomers. The polypeptide is Magnificalysin I (Heteractis magnifica (Magnificent sea anemone)).